Consider the following 317-residue polypeptide: Transaldolase (317 aa).

K132 (schiff-base intermediate with substrate) is an active-site residue.

This sequence belongs to the transaldolase family. Type 1 subfamily. In terms of assembly, homodimer.

It is found in the cytoplasm. The catalysed reaction is D-sedoheptulose 7-phosphate + D-glyceraldehyde 3-phosphate = D-erythrose 4-phosphate + beta-D-fructose 6-phosphate. It functions in the pathway carbohydrate degradation; pentose phosphate pathway; D-glyceraldehyde 3-phosphate and beta-D-fructose 6-phosphate from D-ribose 5-phosphate and D-xylulose 5-phosphate (non-oxidative stage): step 2/3. Functionally, transaldolase is important for the balance of metabolites in the pentose-phosphate pathway. This is Transaldolase from Haemophilus influenzae (strain PittEE).